A 162-amino-acid chain; its full sequence is MKVVLQRVSEASVDVVNELGTLDPTFEPQQIGPGFMILVGVTDEDGDKQIAWLAHKILNLRVFEDAQGKMNRSIQDIGGEILSISQFTLFADVHKGNRPSFIKAGKPEHADLMWIKFNEALRSGGVPVKEGRFGAHMRVGLVNDGPVTIVIDTEHDMPDGTR.

Residues 145–146 carry the Gly-cisPro motif, important for rejection of L-amino acids motif; that stretch reads GP.

This sequence belongs to the DTD family. As to quaternary structure, homodimer.

The protein resides in the cytoplasm. The enzyme catalyses glycyl-tRNA(Ala) + H2O = tRNA(Ala) + glycine + H(+). It catalyses the reaction a D-aminoacyl-tRNA + H2O = a tRNA + a D-alpha-amino acid + H(+). In terms of biological role, an aminoacyl-tRNA editing enzyme that deacylates mischarged D-aminoacyl-tRNAs. Also deacylates mischarged glycyl-tRNA(Ala), protecting cells against glycine mischarging by AlaRS. Acts via tRNA-based rather than protein-based catalysis; rejects L-amino acids rather than detecting D-amino acids in the active site. By recycling D-aminoacyl-tRNA to D-amino acids and free tRNA molecules, this enzyme counteracts the toxicity associated with the formation of D-aminoacyl-tRNA entities in vivo and helps enforce protein L-homochirality. This is D-aminoacyl-tRNA deacylase from Bifidobacterium longum subsp. infantis (strain ATCC 15697 / DSM 20088 / JCM 1222 / NCTC 11817 / S12).